A 98-amino-acid polypeptide reads, in one-letter code: Large ribosomal subunit protein bL27 (98 aa).

Over residues 1–11 (MASKASGGSTR) the composition is skewed to polar residues. The interval 1–20 (MASKASGGSTRNGRDSISKR) is disordered.

Belongs to the bacterial ribosomal protein bL27 family.

In Aquifex aeolicus (strain VF5), this protein is Large ribosomal subunit protein bL27.